Here is a 344-residue protein sequence, read N- to C-terminus: Methionine import ATP-binding protein MetN (344 aa).

In terms of domain architecture, ABC transporter spans 2-241 (IEINQVNKVF…PKTELAHDFI (240 aa)). Residue 38–45 (GSSGAGKS) participates in ATP binding.

The protein belongs to the ABC transporter superfamily. Methionine importer (TC 3.A.1.24) family. As to quaternary structure, the complex is composed of two ATP-binding proteins (MetN), two transmembrane proteins (MetI) and a solute-binding protein (MetQ).

Its subcellular location is the cell inner membrane. The catalysed reaction is L-methionine(out) + ATP + H2O = L-methionine(in) + ADP + phosphate + H(+). It carries out the reaction D-methionine(out) + ATP + H2O = D-methionine(in) + ADP + phosphate + H(+). Functionally, part of the ABC transporter complex MetNIQ involved in methionine import. Responsible for energy coupling to the transport system. The protein is Methionine import ATP-binding protein MetN of Vibrio vulnificus (strain CMCP6).